The sequence spans 497 residues: MSKRPSISFSEFEVPQKGVAVVLVAKGGGFADEAAKAVGDAEKIARIADISGFTGALGKTAEAIETTPAGVEKIVLVGVGEPGKLGNDDWLKIGGAAFSQIGNAERVTLTLALPETTIAGDEAADVALGMVLRSYKFDRYKTRKSEENGEPKHAAKITICVADTHSARKAFEVAEAVADGVIQARNLVNEPANILGPVEFAEEAEKLEKLGVKVEVLGEKELKKLGMGALLGVAQGSVRPPRLVVMEWHGAKGKEKPIAFVGKGVVFDTGGISIKPAANMEDMKGDMGGAAAVTGLMRALAGRKAKVNAIGVIGLVENMPDGNAQRPGDIVTSMSGQTIEVINTDAEGRLVLADALHYTNDRFKPRFIINLATLTGAVMVALGQYHAGLFSNDDELADQLYDAGQSTGEKLWRLPLGTEYDKMIDSKFADMKNSAGRYGGSITAAQFLKRFVGETPWAHLDVAGTAMGSPANEYNQSWASGFGVRLLDRLVRDQFES.

2 residues coordinate Mn(2+): Lys263 and Asp268. The active site involves Lys275. 3 residues coordinate Mn(2+): Asp286, Asp345, and Glu347. Arg349 is an active-site residue.

This sequence belongs to the peptidase M17 family. The cofactor is Mn(2+).

Its subcellular location is the cytoplasm. The catalysed reaction is Release of an N-terminal amino acid, Xaa-|-Yaa-, in which Xaa is preferably Leu, but may be other amino acids including Pro although not Arg or Lys, and Yaa may be Pro. Amino acid amides and methyl esters are also readily hydrolyzed, but rates on arylamides are exceedingly low.. It catalyses the reaction Release of an N-terminal amino acid, preferentially leucine, but not glutamic or aspartic acids.. Functionally, presumably involved in the processing and regular turnover of intracellular proteins. Catalyzes the removal of unsubstituted N-terminal amino acids from various peptides. This Brucella ovis (strain ATCC 25840 / 63/290 / NCTC 10512) protein is Probable cytosol aminopeptidase.